A 264-amino-acid chain; its full sequence is Tryptophan synthase alpha chain (264 aa).

Catalysis depends on proton acceptor residues E45 and D56.

This sequence belongs to the TrpA family. In terms of assembly, tetramer of two alpha and two beta chains.

It catalyses the reaction (1S,2R)-1-C-(indol-3-yl)glycerol 3-phosphate + L-serine = D-glyceraldehyde 3-phosphate + L-tryptophan + H2O. It participates in amino-acid biosynthesis; L-tryptophan biosynthesis; L-tryptophan from chorismate: step 5/5. In terms of biological role, the alpha subunit is responsible for the aldol cleavage of indoleglycerol phosphate to indole and glyceraldehyde 3-phosphate. The protein is Tryptophan synthase alpha chain of Leptospira interrogans serogroup Icterohaemorrhagiae serovar copenhageni (strain Fiocruz L1-130).